The primary structure comprises 322 residues: Rhomboid-like protein 16, chloroplastic (322 aa).

The N-terminal 52 residues, 1-52, are a transit peptide targeting the chloroplast; the sequence is MHAIFCRRVAVGCSSPQLTKLVTKQASQSRHSLSHLLPFDLSSRFVPPYVVS. Helical transmembrane passes span 110 to 130, 166 to 186, 201 to 221, 238 to 258, 265 to 285, and 295 to 315; these read WING…AVFT, FSHV…YFGA, YFAG…LSVI, IGKL…MLLY, FGLM…LNII, and TLTS…WARI.

Belongs to the peptidase S54 family.

The protein resides in the plastid. Its subcellular location is the chloroplast membrane. In terms of biological role, rhomboid-type serine protease that catalyzes intramembrane proteolysis. May cleave the plastid translocon component Tic40. The polypeptide is Rhomboid-like protein 16, chloroplastic (Arabidopsis thaliana (Mouse-ear cress)).